The following is a 310-amino-acid chain: Methionyl-tRNA formyltransferase (310 aa).

(6S)-5,6,7,8-tetrahydrofolate is bound at residue 109 to 112; it reads SLLP.

It belongs to the Fmt family.

It carries out the reaction L-methionyl-tRNA(fMet) + (6R)-10-formyltetrahydrofolate = N-formyl-L-methionyl-tRNA(fMet) + (6S)-5,6,7,8-tetrahydrofolate + H(+). In terms of biological role, attaches a formyl group to the free amino group of methionyl-tRNA(fMet). The formyl group appears to play a dual role in the initiator identity of N-formylmethionyl-tRNA by promoting its recognition by IF2 and preventing the misappropriation of this tRNA by the elongation apparatus. This chain is Methionyl-tRNA formyltransferase, found in Staphylococcus epidermidis (strain ATCC 12228 / FDA PCI 1200).